Here is a 343-residue protein sequence, read N- to C-terminus: Lipase chaperone (343 aa).

A helical membrane pass occupies residues Ile-7–Lys-27.

Belongs to the lipase chaperone family.

The protein localises to the cell inner membrane. In terms of biological role, may be involved in the folding of the extracellular lipase during its passage through the periplasm. The sequence is that of Lipase chaperone (lifO) from Acinetobacter baylyi (strain ATCC 33305 / BD413 / ADP1).